A 511-amino-acid polypeptide reads, in one-letter code: MNQLFVQTEKIVDPREGKLQVVSNVDVCTKIAEFLESTLGPYGMDKLFAGKEIVVTNDGATILKHMNIRHPVGRLLVALSESQDSEVGDGTTSVVILTTEILSCLKPLIKDNFDLGCIKGCLEELRMMCIEHLEKMGMELDDEVLYKLAGTCITSKNIRHEKEYFSRMIVDAVKQAKIDDAESIGVKKVQGGSIGDSVAVNGIAFEKCFTYAGYEQQPKRILNPRILCLNVELEWKSERDNAEIRVGGVEEYQRVVDAEWAIIRRKLDEIISSGANVVLSSLSIGDYATQYFAKHGIFCAGRVSKEDLGRVVGSCGGSILGATDYLEGSLGACALFEERQLGKFRYNYFEGGGTSACTMILRGPGQEVLEEIGRSVHDAVCVVRTALRTRKVVTGGGSVEMELSRIIREKSMKYDDKRMFVAKAVGQAFEKIPLLLARNFGLDTISTIQDLRKRHANGDSCEGISIDGARDMQKLGIYEPLEVKKNMVKASFSAAASIIMIDSTIMAEKSQ.

Belongs to the TCP-1 chaperonin family. Component of the T-complex protein 1 (TCP1) complex.

The protein localises to the cytoplasm. In terms of biological role, molecular chaperone; assists the folding of proteins upon ATP hydrolysis. This chain is T-complex protein 1 subunit eta (CCT7), found in Encephalitozoon cuniculi (strain GB-M1) (Microsporidian parasite).